Consider the following 370-residue polypeptide: Queuine tRNA-ribosyltransferase (370 aa).

Aspartate 93 functions as the Proton acceptor in the catalytic mechanism. Residues 93-97, aspartate 147, glutamine 190, and glycine 217 each bind substrate; that span reads DSGGF. Positions 248 to 254 are RNA binding; it reads GVGTPDY. The active-site Nucleophile is the aspartate 267. Residues 272 to 276 form an RNA binding; important for wobble base 34 recognition region; sequence TRVAR. Positions 305, 307, 310, and 336 each coordinate Zn(2+).

This sequence belongs to the queuine tRNA-ribosyltransferase family. As to quaternary structure, homodimer. Within each dimer, one monomer is responsible for RNA recognition and catalysis, while the other monomer binds to the replacement base PreQ1. The cofactor is Zn(2+).

The enzyme catalyses 7-aminomethyl-7-carbaguanine + guanosine(34) in tRNA = 7-aminomethyl-7-carbaguanosine(34) in tRNA + guanine. The protein operates within tRNA modification; tRNA-queuosine biosynthesis. Functionally, catalyzes the base-exchange of a guanine (G) residue with the queuine precursor 7-aminomethyl-7-deazaguanine (PreQ1) at position 34 (anticodon wobble position) in tRNAs with GU(N) anticodons (tRNA-Asp, -Asn, -His and -Tyr). Catalysis occurs through a double-displacement mechanism. The nucleophile active site attacks the C1' of nucleotide 34 to detach the guanine base from the RNA, forming a covalent enzyme-RNA intermediate. The proton acceptor active site deprotonates the incoming PreQ1, allowing a nucleophilic attack on the C1' of the ribose to form the product. After dissociation, two additional enzymatic reactions on the tRNA convert PreQ1 to queuine (Q), resulting in the hypermodified nucleoside queuosine (7-(((4,5-cis-dihydroxy-2-cyclopenten-1-yl)amino)methyl)-7-deazaguanosine). The protein is Queuine tRNA-ribosyltransferase of Natranaerobius thermophilus (strain ATCC BAA-1301 / DSM 18059 / JW/NM-WN-LF).